The primary structure comprises 617 residues: MISPSLELLHSGLCKFPEVEGKMTTFKEAVTFKDVAVVFTEEELGLLDPAQRKLYRDVMLENFRNLLSVGNQPFHQDTFHFLGKEKFWKMKTTSQREGNSGGKIQIEMETVPEAGPHEEWSCQQIWEQIASDLTRSQNSIRNSSQFFKEGDVPCQIEARLSISHVQQKPYRCNECKQSFSDVSVFDLHQQSHSGEKSHTCGECGKSFCYSPALHIHQRVHMGEKCYKCDVCGKEFNQSSHLQTHQRVHTGEKPFKCGQCGKGFHSRSALNVHCKLHTGEKPYNCEECGKAFIHDSQLQEHQRIHTGEKPFKCDICGKSFRVRSRLNRHSMVHTGEKPFRCDTCGKNFRQRSALNSHSMVHIEEKPYKCEQCGKGFICRRDFCKHQMVHTGEKPYNCKECGKTFRWSSCLLNHQQVHSGQKSFKCEECGKGFYTNSRRSSHQRSHNGEKPYNCEECGKDYKRRLDLEFHQRVHTGERPYNCKECGKSFGWASCLLKHQRLHSGEKPFKCEECGKRFTQSSQLHSHQTCHTGEKLYKCEQCEKGYNSKFNLDMHQRVHGGERPYNCKECGKSFGWASCLLKHQRLHSGEKPLKSGVWEEIYSEFTASFTSVSLCGRKAI.

One can recognise a KRAB domain in the interval 30 to 100 (VTFKDVAVVF…KTTSQREGNS (71 aa)). 3 consecutive C2H2-type zinc fingers follow at residues 170-192 (YRCN…QQSH), 198-220 (HTCG…QRVH), and 226-248 (YKCD…QRVH). The segment at 254–276 (FKCGQCGKGFHSRSALNVHCKLH) adopts a C2H2-type 4; degenerate zinc-finger fold. 11 consecutive C2H2-type zinc fingers follow at residues 282–304 (YNCE…QRIH), 310–332 (FKCD…SMVH), 338–360 (FRCD…SMVH), 366–388 (YKCE…QMVH), 394–416 (YNCK…QQVH), 422–444 (FKCE…QRSH), 450–472 (YNCE…QRVH), 478–500 (YNCK…QRLH), 506–528 (FKCE…QTCH), 534–556 (YKCE…QRVH), and 562–584 (YNCK…QRLH).

The protein belongs to the krueppel C2H2-type zinc-finger protein family.

It is found in the nucleus. Functionally, may be involved in transcriptional regulation. This chain is Zinc finger protein 221 (ZNF221), found in Homo sapiens (Human).